The chain runs to 185 residues: Elongation factor P (185 aa).

Belongs to the elongation factor P family.

The protein resides in the cytoplasm. It participates in protein biosynthesis; polypeptide chain elongation. Involved in peptide bond synthesis. Stimulates efficient translation and peptide-bond synthesis on native or reconstituted 70S ribosomes in vitro. Probably functions indirectly by altering the affinity of the ribosome for aminoacyl-tRNA, thus increasing their reactivity as acceptors for peptidyl transferase. This is Elongation factor P from Streptococcus uberis (strain ATCC BAA-854 / 0140J).